Reading from the N-terminus, the 198-residue chain is Large ribosomal subunit protein bL25 (198 aa).

It belongs to the bacterial ribosomal protein bL25 family. CTC subfamily. In terms of assembly, part of the 50S ribosomal subunit; part of the 5S rRNA/L5/L18/L25 subcomplex. Contacts the 5S rRNA. Binds to the 5S rRNA independently of L5 and L18.

Functionally, this is one of the proteins that binds to the 5S RNA in the ribosome where it forms part of the central protuberance. The protein is Large ribosomal subunit protein bL25 of Pseudomonas putida (strain W619).